Reading from the N-terminus, the 395-residue chain is Fractalkine (395 aa).

Residues 1–24 (MAPSPLAWLLRLAAFFHLCTLLPG) form the signal peptide. A chemokine and involved in interaction with ITGAV:ITGB3 and ITGA4:ITGB1 region spans residues 25–100 (QHLGMTKCEI…HQAAALTKNG (76 aa)). Topologically, residues 25-336 (QHLGMTKCEI…TPVPDTQAAT (312 aa)) are extracellular. 2 cysteine pairs are disulfide-bonded: C32-C58 and C36-C74. The segment at 101-336 (GKFEKRVDNV…TPVPDTQAAT (236 aa)) is mucin-like stalk. Polar residues-rich tracts occupy residues 148-172 (ARGT…TSEA) and 201-210 (AVYQSGSSSW). 2 disordered regions span residues 148–180 (ARGT…LTAK) and 201–305 (AVYQ…SGSQ). The span at 218–236 (SPSTTAPSPQVSTTSPSTP) shows a compositional bias: low complexity. Residues 337 to 357 (RRQAVGLLAFLGLLFCLGVAM) traverse the membrane as a helical segment. The Cytoplasmic segment spans residues 358–395 (FAYQSLQGCPRKMAGEMVEGLRYVPRSCGSNSYVLVPV).

It belongs to the intercrine delta family. As to quaternary structure, monomer. Forms a ternary complex with CX3CR1 and ITGAV:ITGB3 or ITGA4:ITGB1. In terms of processing, a soluble short 80 kDa form may be released by proteolytic cleavage from the long membrane-anchored form. Highest levels in brain. Lower levels in kidney, heart and lung. Also found in skeletal muscle and testis. Highly expressed in lesional smooth muscle cells, but not macrophages. Low levels of ABCD-3 mRNA were also found in anti-CD40-stimulated splenic B-cells, but not in resting B-cells. Also expressed in dendritic cells.

The protein localises to the cell membrane. Its subcellular location is the secreted. In terms of biological role, chemokine that acts as a ligand for both CX3CR1 and integrins ITGAV:ITGB3 and ITGA4:ITGB1. The CX3CR1-CX3CL1 signaling exerts distinct functions in different tissue compartments, such as immune response, inflammation, cell adhesion and chemotaxis. Regulates leukocyte adhesion and migration processes at the endothelium. Can activate integrins in both a CX3CR1-dependent and CX3CR1-independent manner. In the presence of CX3CR1, activates integrins by binding to the classical ligand-binding site (site 1) in integrins. In the absence of CX3CR1, binds to a second site (site 2) in integrins which is distinct from site 1 and enhances the binding of other integrin ligands to site 1. Functionally, the soluble form is chemotactic for T-cells and monocytes, but not for neutrophils. Its function is as follows. The membrane-bound form promotes adhesion of those leukocytes to endothelial cells. This Mus musculus (Mouse) protein is Fractalkine.